A 200-amino-acid chain; its full sequence is Dephospho-CoA kinase (200 aa).

Residues 4 to 200 enclose the DPCK domain; the sequence is VIGLTGGIAS…VILKNWNIID (197 aa). 12–17 is a binding site for ATP; that stretch reads ASGKST.

This sequence belongs to the CoaE family.

Its subcellular location is the cytoplasm. The enzyme catalyses 3'-dephospho-CoA + ATP = ADP + CoA + H(+). It functions in the pathway cofactor biosynthesis; coenzyme A biosynthesis; CoA from (R)-pantothenate: step 5/5. Catalyzes the phosphorylation of the 3'-hydroxyl group of dephosphocoenzyme A to form coenzyme A. This chain is Dephospho-CoA kinase, found in Bacillus cereus (strain ATCC 10987 / NRS 248).